The sequence spans 261 residues: MDMKRRIHLELRNRTPAAVRELVLDNCKSNDGKIEGLTAEFVNLEFLSLINVGLISVSNLPKLPKLKKLELSDNRICGGLDMLAEKLPNLTHLNLSGNKLKDIGTLEPLKKLECLKSLDLFNCEVTNLNDYRESVFKLLPQLTYLDGYDREDREAPDSDAEVDGVDEEEDDEEGENEDKEEDEDGEEEEFDDEEDDDEDEDVEGEEDEDKVSGEEEEFGHDGEADEDDEDEDEDEDEDEEEEESGKGEGRKRETDDEGEDD.

LRR repeat units lie at residues 16–40 (PAAV…LTAE), 43–64 (NLEF…PKLP), 65–87 (KLKK…AEKL), and 89–110 (NLTH…EPLK). The residue at position 86 (K86) is an N6-acetyllysine. Residues 123 to 161 (CEVTNLNDYRESVFKLLPQLTYLDGYDREDREAPDSDAE) form the LRRCT domain. The tract at residues 149–261 (DREDREAPDS…RETDDEGEDD (113 aa)) is disordered. Residues 157–243 (DSDAEVDGVD…DEDEDEEEEE (87 aa)) are compositionally biased toward acidic residues. Phosphoserine is present on S158. Basic and acidic residues predominate over residues 244-254 (SGKGEGRKRET). T254 carries the phosphothreonine modification.

It belongs to the ANP32 family. As to quaternary structure, monomer. Interacts with histones H3 and H4. In terms of processing, some glutamate residues are glycylated by TTLL8. This modification occurs exclusively on glutamate residues and results in a glycine chain on the gamma-carboxyl group.

Its subcellular location is the nucleus. Its function is as follows. Multifunctional protein working as a cell cycle progression factor as well as a cell survival factor. Required for the progression from the G1 to the S phase. Anti-apoptotic protein which functions as a caspase-3 inhibitor. Has no phosphatase 2A (PP2A) inhibitor activity. Exhibits histone chaperone properties, stimulating core histones to assemble into a nucleosome. This Ovis aries (Sheep) protein is Acidic leucine-rich nuclear phosphoprotein 32 family member B (ANP32B).